The chain runs to 367 residues: 4-hydroxy-3-methylbut-2-en-1-yl diphosphate synthase (flavodoxin) (367 aa).

Cys270, Cys273, Cys305, and Glu312 together coordinate [4Fe-4S] cluster.

The protein belongs to the IspG family. Requires [4Fe-4S] cluster as cofactor.

It carries out the reaction (2E)-4-hydroxy-3-methylbut-2-enyl diphosphate + oxidized [flavodoxin] + H2O + 2 H(+) = 2-C-methyl-D-erythritol 2,4-cyclic diphosphate + reduced [flavodoxin]. It functions in the pathway isoprenoid biosynthesis; isopentenyl diphosphate biosynthesis via DXP pathway; isopentenyl diphosphate from 1-deoxy-D-xylulose 5-phosphate: step 5/6. In terms of biological role, converts 2C-methyl-D-erythritol 2,4-cyclodiphosphate (ME-2,4cPP) into 1-hydroxy-2-methyl-2-(E)-butenyl 4-diphosphate. This is 4-hydroxy-3-methylbut-2-en-1-yl diphosphate synthase (flavodoxin) from Pasteurella multocida (strain Pm70).